A 319-amino-acid chain; its full sequence is Phenoxybenzoate dioxygenase subunit beta (319 aa).

The region spanning M7–D109 is the FAD-binding FR-type domain. P113–A223 serves as a coordination point for NAD(+). One can recognise a 2Fe-2S ferredoxin-type domain in the interval F234 to L319. [2Fe-2S] cluster is bound by residues C268, C273, C276, and C306.

It belongs to the PDR/VanB family. In terms of assembly, this dioxygenase system consists of two proteins: the alpha subunit (PobA) and a subunit (PobB) that acts as a ferredoxin and a ferredoxin reductase. FMN is required as a cofactor.

The protein operates within aromatic compound metabolism; carboxydiphenyl ether degradation. Degrades exclusively diarylether compounds having carboxyl groups in the 3- or 4-position. Yields a hemiacetal that spontaneously hydrolyzes to phenol and protocatechuate. This Ectopseudomonas oleovorans (Pseudomonas oleovorans) protein is Phenoxybenzoate dioxygenase subunit beta (pobB).